The chain runs to 913 residues: Probable TonB-dependent receptor HI_1217 (913 aa).

A signal peptide spans 1–27; it reads MKKAIKLNLITLGLINTIGMTITQAQA. One can recognise a TBDR plug domain in the interval 42–165; the sequence is SNDKKPFTEA…LAGSANFRTL (124 aa). The region spanning 176–913 is the TBDR beta-barrel domain; the sequence is PFGIILKGMT…TYILSLNYKF (738 aa). The TonB C-terminal box signature appears at 896–913; sequence LYNFARGRTYILSLNYKF.

It belongs to the TonB-dependent receptor family.

It localises to the cell outer membrane. Its function is as follows. Probable receptor, TonB-dependent. The polypeptide is Probable TonB-dependent receptor HI_1217 (Haemophilus influenzae (strain ATCC 51907 / DSM 11121 / KW20 / Rd)).